Here is a 268-residue protein sequence, read N- to C-terminus: N-formylmaleamate deformylase (268 aa).

One can recognise an AB hydrolase-1 domain in the interval 28–251; sequence ALILVPGITS…NAGHMIPWDD (224 aa). Residues Ser-101, Glu-221, and His-245 each act as charge relay system in the active site.

The enzyme catalyses N-formylmaleamate + H2O = maleamate + formate + H(+). The protein operates within cofactor degradation; nicotinate degradation. Deformylase that catalyzes the conversion of N-formylmaleamic acid to maleamate in the aerobic nicotinate degradation pathway. This chain is N-formylmaleamate deformylase (nicD), found in Pseudomonas putida (strain ATCC 47054 / DSM 6125 / CFBP 8728 / NCIMB 11950 / KT2440).